The following is a 380-amino-acid chain: Cytochrome b (380 aa).

A run of 4 helical transmembrane segments spans residues 34–54, 78–99, 114–134, and 179–199; these read FGSL…LLAM, WLIR…YFHI, WNTG…GYVL, and FFAL…IHLT. Heme b is bound by residues histidine 84 and histidine 98. Residues histidine 183 and histidine 197 each coordinate heme b. Histidine 202 serves as a coordination point for a ubiquinone. The next 4 membrane-spanning stretches (helical) occupy residues 227-247, 289-309, 321-341, and 348-368; these read LKDI…ALFS, LGGV…PFLH, ISQL…WVGS, and FIII…VLFP.

Belongs to the cytochrome b family. The cytochrome bc1 complex contains 11 subunits: 3 respiratory subunits (MT-CYB, CYC1 and UQCRFS1), 2 core proteins (UQCRC1 and UQCRC2) and 6 low-molecular weight proteins (UQCRH/QCR6, UQCRB/QCR7, UQCRQ/QCR8, UQCR10/QCR9, UQCR11/QCR10 and a cleavage product of UQCRFS1). This cytochrome bc1 complex then forms a dimer. Heme b serves as cofactor.

The protein resides in the mitochondrion inner membrane. Its function is as follows. Component of the ubiquinol-cytochrome c reductase complex (complex III or cytochrome b-c1 complex) that is part of the mitochondrial respiratory chain. The b-c1 complex mediates electron transfer from ubiquinol to cytochrome c. Contributes to the generation of a proton gradient across the mitochondrial membrane that is then used for ATP synthesis. The chain is Cytochrome b (MT-CYB) from Pachyptila salvini (Salvin's prion).